The sequence spans 342 residues: Apurinic-apyrimidinic endonuclease 1 (342 aa).

8 residues coordinate Zn(2+): H61, E136, D170, H173, H207, D220, H222, and E252. Residues 299-310 (HLNKFEKKEAKK) are compositionally biased toward basic and acidic residues. A disordered region spans residues 299–342 (HLNKFEKKEAKKDRKKKSKDGDQTTLLLRKKQKLGNAEVKSLDE).

The protein belongs to the AP endonuclease 2 family. The cofactor is Zn(2+).

It localises to the nucleus. Functionally, DNA repair enzyme that cleaves apurinic/apyrimidinic (AP) sites and removes 3'-blocking groups present at single strand breaks of damaged DNA. Provides back-up AP endonuclease (APE) activity to apn2 together with uve1. The protein is Apurinic-apyrimidinic endonuclease 1 (apn1) of Schizosaccharomyces pombe (strain 972 / ATCC 24843) (Fission yeast).